The chain runs to 651 residues: A-type voltage-gated potassium channel KCND1 (651 aa).

Residues 1–183 (MAAGVATWLP…RAFENPHTST (183 aa)) are Cytoplasmic-facing. The segment at 2-20 (AAGVATWLPFARAAAVGWL) is interaction with KCNIP1, KCNIP2, and other family members. The Zn(2+) site is built by histidine 104, cysteine 131, and cysteine 132. Residues 144-164 (AERLAEDEEAEQAGEGPALPA) form a disordered region. A helical transmembrane segment spans residues 184 to 205 (AALVFYYVTGFFIAVSVIANVV). Residues 206-230 (ETIPCRGTPRWPSKEQSCGDRFPTA) lie on the Extracellular side of the membrane. A helical membrane pass occupies residues 231–252 (FFCMDTACVLIFTGEYLLRLFA). At 253-263 (APSRCRFLRSV) the chain is on the cytoplasmic side. Residues 264-284 (MSLIDVVAILPYYIGLFVPKN) form a helical membrane-spanning segment. Residues 285 to 287 (DDV) lie on the Extracellular side of the membrane. A helical; Voltage-sensor transmembrane segment spans residues 288-308 (SGAFVTLRVFRVFRIFKFSRH). Over 309-323 (SQGLRILGYTLKSCA) the chain is Cytoplasmic. The S4-S5 linker stretch occupies residues 310-323 (QGLRILGYTLKSCA). A helical transmembrane segment spans residues 324–345 (SELGFLLFSLTMAIIIFATVMF). The Extracellular segment spans residues 346–359 (YAEKGTSKTNFTSI). An N-linked (GlcNAc...) asparagine glycan is attached at asparagine 355. The helical intramembrane region spans 360 to 371 (PAAFWYTIVTMT). Residues 372–377 (TLGYGD) carry the Selectivity filter motif. An intramembrane segment occupies 372 to 379 (TLGYGDMV). Residues 380-386 (PSTIAGK) are Extracellular-facing. A helical membrane pass occupies residues 387 to 415 (IFGSICSLSGVLVIALPVPVIVSNFSRIY). At 416-651 (HQNQRADKRR…LPETVKISSL (236 aa)) the chain is on the cytoplasmic side. Serine 458 bears the Phosphoserine mark. The required for dendritic targeting stretch occupies residues 474-489 (FEQQHHHLLHCLEKTT). Serine 555 bears the Phosphoserine mark. Disordered regions lie at residues 566–585 (RRSPAPQTRSSLNAKPHDSL) and 601–651 (IPTP…ISSL). Residues 626-637 (TPNTTLRNSSLG) show a composition bias toward polar residues.

Belongs to the potassium channel family. D (Shal) (TC 1.A.1.2) subfamily. Kv4.1/KCND1 sub-subfamily. As to quaternary structure, component of heteromultimeric potassium channels. Identified in potassium channel complexes containing KCND1, KCND2, KCND3, KCNIP1, KCNIP2, KCNIP3, KCNIP4, DPP6 and DPP10.

Its subcellular location is the cell membrane. It carries out the reaction K(+)(in) = K(+)(out). In terms of biological role, A-type voltage-gated potassium channel that mediates transmembrane potassium transport in excitable membranes in the brain. Mediates A-type current I(SA) in suprachiasmatic nucleus (SCN) neurons. Exhibits a low-threshold A-type current with a hyperpolarized steady-state inactivation midpoint and the recovery process was steeply voltage-dependent, with recovery being markedly faster at more negative potentials. May regulates repetitive firing rates in the suprachiasmatic nucleus (SCN) neurons and circadian rhythms in neuronal excitability and behavior. Contributes to the regulation of the circadian rhythm of action potential firing in suprachiasmatic nucleus neurons, which regulates the circadian rhythm of locomotor activity. The regulatory subunit KCNIP1 modulates the kinetics of channel inactivation, increases the current amplitudes and accelerates recovery from inactivation, shifts activation in a depolarizing direction. The regulatory subunit DPP10 decreases the voltage sensitivity of the inactivation channel gating. The protein is A-type voltage-gated potassium channel KCND1 of Mus musculus (Mouse).